The chain runs to 172 residues: Disulfide bond formation protein B (172 aa).

Residues 1–11 (MNPFRWSFRAQ) lie on the Cytoplasmic side of the membrane. Residues 12-28 (FLLGFLACAGLLAYAIY) form a helical membrane-spanning segment. Over 29-46 (VQLHLGLEPCPLCIFQRI) the chain is Periplasmic. Cysteine 38 and cysteine 41 are joined by a disulfide. A helical membrane pass occupies residues 47–63 (AFAALAVFFLIGALHGP). Residues 64-70 (RAAGARK) lie on the Cytoplasmic side of the membrane. The helical transmembrane segment at 71-88 (VYGVLSFIAAGVGMGIGA) threads the bilayer. Over 89–145 (RHVWVQIRPKDMMSSCGPPLSFLSETMGPFEVFRTVLTGTGDCGNIDWRFLGLSMPM) the chain is Periplasmic. An intrachain disulfide couples cysteine 104 to cysteine 131. A helical membrane pass occupies residues 146–164 (WSMVWFVGLALWALSAGFK). Residues 165-172 (ARRSSLHH) lie on the Cytoplasmic side of the membrane.

This sequence belongs to the DsbB family.

Its subcellular location is the cell inner membrane. Its function is as follows. Required for disulfide bond formation in some periplasmic proteins. Acts by oxidizing the DsbA protein. This is Disulfide bond formation protein B from Xanthomonas oryzae pv. oryzae (strain MAFF 311018).